The primary structure comprises 2248 residues: Zinc finger protein 407 (2248 aa).

Basic and acidic residues predominate over residues 1-32; sequence MMDSENKPENDEDEKINKEAQDLTKLSSHNED. Residues 1 to 84 form a disordered region; that stretch reads MMDSENKPEN…RRKLDEAEPL (84 aa). 3 C2H2-type zinc fingers span residues 186-208, 215-238, and 244-268; these read LKCSICGHLFSSCSDLEKHAESH, HTCCHCSHKAESSSALHMHIKQAH, and FSCDLCGFQCSEENLLNAHYLGKTH. Disordered regions lie at residues 291–322 and 494–515; these read KKSRTMATKNVHSKPRTSKSIAKNSDSKGLRN and SETQEAEQGQGSARPPDSGLHS. Positions 494 to 504 are enriched in polar residues; that stretch reads SETQEAEQGQG. 3 consecutive C2H2-type zinc fingers follow at residues 528-551, 557-581, and 615-639; these read CACTDCGQVATNRTDLEIHVKRCH, FYCRTCDFSSMSRRDLDEHLHSNQH, and FLCTPCNLFFLSEKDVEEHKATEKH. The interval 667-700 is disordered; it reads ESENAKESMDDSGKASQEEPLKSRVSHGNEVRHS. The span at 669–699 shows a compositional bias: basic and acidic residues; it reads ENAKESMDDSGKASQEEPLKSRVSHGNEVRH. A C2H2-type 7 zinc finger spans residues 705 to 728; sequence FQCKKCFYKTRSSTVLTRHIKLRH. The interval 821-847 is disordered; that stretch reads LSQSGGSTKDDELASTTTPKRGRPKGN. C2H2-type zinc fingers lie at residues 850–873 and 879–903; these read RTCSHCGLLASSITNLTVHIRRKH and YLCKVCKYYTVTKGDMERHCATKKH. Positions 910-962 are disordered; it reads EASGKHSSDIIVGPEGGSLEAGKKNAGSAVTMSDEHANKPAESPTSVLEKPDR. C2H2-type zinc fingers lie at residues 1017–1040 and 1046–1070; these read NKCLHCEFSAHSSASLELHVKRKH and FYCMACDYYAVTRREMTRHAATEKH. Phosphoserine is present on Ser1262. 2 consecutive C2H2-type zinc fingers follow at residues 1444 to 1468 and 1486 to 1509; these read FHCLLCGKSFYTESNLHQHLASAGH and FKCVKCTEPFDSEQNLFLHIKGQH. The C2H2-type 14; degenerate zinc-finger motif lies at 1537-1561; that stretch reads NVCKYCGKMCRSSNSMAFLAHIRTH. 8 C2H2-type zinc fingers span residues 1567–1589, 1595–1618, 1628–1650, 1656–1680, 1686–1708, 1714–1736, 1742–1767, and 1773–1796; these read FKCKICHFATAQLGDARNHVKRH, YKCHVCGVAFVMKKHLNTHLLGKH, FTCHLCDRSFTEKWALNNHMKLH, FKCTWPTCHYSFLTASAMKDHYRTH, FLCDLCGFAGGTRHALTKHRRQH, FKCDECNFASTTQSHLTRHKRVH, YRCPWCDYRSNCAENIRKHILHTGKH, and YNCPKCDYGTNVPVEFRNHLKEQH.

It is found in the nucleus. May be involved in transcriptional regulation. The sequence is that of Zinc finger protein 407 (ZNF407) from Homo sapiens (Human).